A 303-amino-acid polypeptide reads, in one-letter code: MTLTAPPRLLLVHAHPDDETLWTGGTIARYAARGVQVVVVTCTLGEEGEVIPDNLRGLAADQADQLGGYRVGELRSACAALRVADQRFLGGVGRWRDSGMLWEKPGQASALPDAHPRAFAVGDADEQADALEELLREFRPQVVVTYAADGGYGHPDHIRAHEVTMAAAAKVPDVLRVFHAVPSQGVVKEGLAALAEAEGMPFELPEPHELPGVPDERITTVVDVGEHLPAKISALRAHGTQVKMWLEQWNNGAGVAAYALSNGVAQPVVNTEHYVLATGDQQGCETDLFGGLGVSGTEPVGAR.

Residues H15, D18, and H157 each coordinate Zn(2+).

The protein belongs to the MshB deacetylase family. Zn(2+) is required as a cofactor.

The enzyme catalyses 1D-myo-inositol 2-acetamido-2-deoxy-alpha-D-glucopyranoside + H2O = 1D-myo-inositol 2-amino-2-deoxy-alpha-D-glucopyranoside + acetate. Its function is as follows. Catalyzes the deacetylation of 1D-myo-inositol 2-acetamido-2-deoxy-alpha-D-glucopyranoside (GlcNAc-Ins) in the mycothiol biosynthesis pathway. In Saccharopolyspora erythraea (strain ATCC 11635 / DSM 40517 / JCM 4748 / NBRC 13426 / NCIMB 8594 / NRRL 2338), this protein is 1D-myo-inositol 2-acetamido-2-deoxy-alpha-D-glucopyranoside deacetylase 1.